The chain runs to 2522 residues: Neurogenic locus notch homolog protein 1 (2522 aa).

Residues 1–19 (MYRIGLLVLIWSLLGLAQG) form the signal peptide. EGF-like domains are found at residues 20-57 (LRCT…ERCQ), 58-99 (YPNP…KVCL), 102-140 (VDNA…DSCQ), and 141-177 (QADP…ATCK). Over 20–1730 (LRCTQTAEMC…ETAKPPPPLY (1711 aa)) the chain is Extracellular. Intrachain disulfides connect Cys-22/Cys-35, Cys-29/Cys-45, Cys-47/Cys-56, Cys-62/Cys-74, Cys-68/Cys-87, Cys-89/Cys-98, Cys-106/Cys-117, Cys-111/Cys-128, Cys-130/Cys-139, Cys-145/Cys-156, Cys-150/Cys-165, Cys-167/Cys-176, Cys-183/Cys-194, Cys-188/Cys-203, Cys-205/Cys-214, Cys-221/Cys-232, Cys-226/Cys-242, Cys-244/Cys-253, Cys-260/Cys-271, Cys-265/Cys-280, Cys-282/Cys-291, Cys-298/Cys-311, Cys-305/Cys-320, Cys-322/Cys-331, Cys-338/Cys-349, Cys-343/Cys-358, Cys-360/Cys-369, Cys-375/Cys-386, Cys-380/Cys-397, Cys-399/Cys-408, Cys-415/Cys-428, Cys-422/Cys-437, and Cys-439/Cys-448. Residues 179–215 (DINECSQNPCRNGGQCLNEFGSYRCNCQNRFTGRNCE) form the EGF-like 5; calcium-binding domain. The region spanning 217–254 (PYVPCNPSPCLNGGTCRQTDDTSYECTCLPGFSGQNCE) is the EGF-like 6 domain. Residue Thr-231 is glycosylated (O-linked (Fuc...) threonine; alternate). Residue Thr-231 is glycosylated (O-linked (GalNAc...) threonine; alternate). Residues 256-292 (NIDDCPSNNCRNGGTCVDGVNTYNCQCPPDWTGQYCT) form the EGF-like 7; calcium-binding domain. Residues 294–332 (DVDECQLMPNACQNGGTCHNTYGGYNCVCVNGWTGEDCS) enclose the EGF-like 8; calcium-binding domain. One can recognise an EGF-like 9; calcium-binding domain in the interval 334–370 (NIDDCANAACHSGATCHDRVASFFCECPHGRTGLLCH). In terms of domain architecture, EGF-like 10 spans 371–409 (LDNACISNPCNEGSNCDTNPVNGKAICTCPPGYTGPACN). The 39-residue stretch at 411-449 (DVDECSLGANPCEHGGRCTNTLGSFQCNCPQGYAGPRCE) folds into the EGF-like 11; calcium-binding domain. Residues Thr-431 and Ser-434 each contribute to the Ca(2+) site. Ser-434 carries an O-linked (Glc...) serine glycan. Positions 451, 452, and 454 each coordinate Ca(2+). One can recognise an EGF-like 12; calcium-binding domain in the interval 451–487 (DVNECLSNPCQNDATCLDQIGEFQCICMPGYEGLYCE). Intrachain disulfides connect Cys-455-Cys-466, Cys-460-Cys-475, and Cys-477-Cys-486. The O-linked (Glc...) serine glycan is linked to Ser-457. O-linked (Fuc...) threonine glycosylation occurs at Thr-465. Positions 468 and 469 each coordinate Ca(2+). Ca(2+) is bound by residues Asn-489, Ile-490, and Glu-492. In terms of domain architecture, EGF-like 13; calcium-binding spans 489–525 (NIDECASNPCLHNGKCVDKINEFHCECPTGFNGNLCQ). 75 cysteine pairs are disulfide-bonded: Cys-493/Cys-504, Cys-498/Cys-513, Cys-515/Cys-524, Cys-531/Cys-542, Cys-536/Cys-551, Cys-553/Cys-562, Cys-569/Cys-579, Cys-574/Cys-588, Cys-590/Cys-599, Cys-606/Cys-617, Cys-611/Cys-626, Cys-628/Cys-637, Cys-644/Cys-654, Cys-649/Cys-663, Cys-665/Cys-674, Cys-681/Cys-692, Cys-686/Cys-701, Cys-703/Cys-712, Cys-719/Cys-729, Cys-724/Cys-738, Cys-740/Cys-749, Cys-756/Cys-767, Cys-761/Cys-776, Cys-778/Cys-787, Cys-794/Cys-805, Cys-799/Cys-814, Cys-816/Cys-825, Cys-832/Cys-843, Cys-837/Cys-854, Cys-856/Cys-865, Cys-872/Cys-883, Cys-877/Cys-892, Cys-894/Cys-903, Cys-910/Cys-921, Cys-915/Cys-930, Cys-932/Cys-941, Cys-948/Cys-959, Cys-953/Cys-968, Cys-970/Cys-979, Cys-986/Cys-997, Cys-991/Cys-1006, Cys-1008/Cys-1017, Cys-1024/Cys-1035, Cys-1029/Cys-1044, Cys-1046/Cys-1055, Cys-1062/Cys-1073, Cys-1067/Cys-1082, Cys-1084/Cys-1093, Cys-1100/Cys-1121, Cys-1115/Cys-1130, Cys-1132/Cys-1141, Cys-1148/Cys-1159, Cys-1153/Cys-1168, Cys-1170/Cys-1179, Cys-1186/Cys-1197, Cys-1191/Cys-1206, Cys-1208/Cys-1217, Cys-1224/Cys-1243, Cys-1237/Cys-1252, Cys-1254/Cys-1263, Cys-1270/Cys-1283, Cys-1275/Cys-1292, Cys-1294/Cys-1303, Cys-1310/Cys-1321, Cys-1315/Cys-1333, Cys-1335/Cys-1344, Cys-1351/Cys-1362, Cys-1356/Cys-1371, Cys-1373/Cys-1382, Cys-1390/Cys-1401, Cys-1395/Cys-1412, Cys-1414/Cys-1423, Cys-1447/Cys-1470, Cys-1452/Cys-1465, and Cys-1461/Cys-1477. The O-linked (Glc...) serine glycan is linked to Ser-495. Asp-506 and Lys-507 together coordinate Ca(2+). An EGF-like 14; calcium-binding domain is found at 527–563 (DVDECASTPCKNGAKCLDGPNSYTCQCTEGFTGRHCE). Positions 565-600 (DINECIPDPCHYGTCKDGIATFTCLCRPGYTGRLCD) constitute an EGF-like 15; calcium-binding domain. The EGF-like 16; calcium-binding domain maps to 602–638 (DINECLSQPCQNGGQCTDRENGYICTCPKGTTGVNCE). The region spanning 640-675 (NLDDCASNPCDYGKCIDKIDGYECTCEPGYTGKMCN) is the EGF-like 17; calcium-binding domain. An EGF-like 18; calcium-binding domain is found at 677-713 (NIDECASNPCRNGGTCKDKINGFTCVCPDGYHDHMCL). Residues 715–750 (EVNECNSNPCIHGTCHDGINGYKCDCDAGWSGSNCD) form the EGF-like 19; calcium-binding domain. Positions 752–788 (NNNECESNPCMNGGTCKDMTGAYICTCRAGFSGPNCQ) constitute an EGF-like 20; calcium-binding domain. Positions 790–826 (NINECASNPCLNRGTCIDDVAGYKCNCMLPYTGAICE) constitute an EGF-like 21; calcium-binding domain. In terms of domain architecture, EGF-like 22 spans 828-866 (VLAPCSGSPCKNGGRCKESEDYETFSCECPPGWQGQTCE). An EGF-like 23; calcium-binding domain is found at 868–904 (DMNECVNRPCRNGAMCQNTNGSYKCNCKPGYAGRHCE). N-linked (GlcNAc...) asparagine glycosylation is present at Asn-887. The EGF-like 24; calcium-binding domain occupies 906-942 (DIDDCQPNPCHNGGSCSDGINMFFCNCPAGFRGPKCE). The EGF-like 25; calcium-binding domain maps to 944–980 (DINECASNPCKNGANCTDCVNSYTCTCQPGFSGIHCE). The N-linked (GlcNAc...) asparagine glycan is linked to Asn-958. One can recognise an EGF-like 26 domain in the interval 982–1018 (NTPDCTESSCFNGGTCIDGINTFSCQCPPGFTGNYCQ). Residues 1020 to 1056 (DINECDSKPCLNGGTCQDSYGAYKCTCPQGYTGLNCQ) form the EGF-like 27; calcium-binding domain. EGF-like domains are found at residues 1058 to 1094 (LVRW…VYCD) and 1096 to 1142 (PSVS…SYCE). Residues 1144 to 1180 (QVDECSPNPCQNGATCTDYLGGYSCECVAGYHGVNCS) form the EGF-like 30; calcium-binding domain. Asn-1178 carries N-linked (GlcNAc...) asparagine glycosylation. The region spanning 1182 to 1218 (EINECLSHPCHNGGTCIDLINTYKCSCPRGTQGVHCE) is the EGF-like 31; calcium-binding domain. One can recognise an EGF-like 32; calcium-binding domain in the interval 1220–1264 (NVDDCTPFYDSVSLEPKCFNNGKCFDRVGGYNCICPPGFVGERCE). 4 EGF-like domains span residues 1266-1304 (DVNE…RRCD), 1306-1345 (VVDG…ATCE), 1347-1383 (DART…ATCQ), and 1386-1424 (VVSP…LFCH). Thr-1400 is a glycosylation site (O-linked (Fuc...) threonine; alternate). Residue Thr-1400 is glycosylated (O-linked (GalNAc...) threonine; alternate). 3 LNR repeats span residues 1447 to 1487 (CENE…PWKN), 1488 to 1529 (CTQS…CNPL), and 1530 to 1564 (YDQY…NMPE). 3 residues coordinate Ca(2+): Asn-1458, Asp-1473, and Asp-1476. Asn-1487 carries N-linked (GlcNAc...) asparagine glycosylation. 5 disulfides stabilise this stretch: Cys-1488/Cys-1512, Cys-1494/Cys-1507, Cys-1503/Cys-1519, Cys-1534/Cys-1547, and Cys-1543/Cys-1559. Asp-1500 contributes to the Ca(2+) binding site. Asn-1508 carries an N-linked (GlcNAc...) asparagine glycan. Ca(2+) contacts are provided by Asp-1515, Asp-1518, Asp-1540, Asp-1555, and Asp-1558. An N-linked (GlcNAc...) asparagine glycan is attached at Asn-1584. The chain crosses the membrane as a helical span at residues 1731 to 1751 (AMFSMLVIPLLIIFVIMVVIV). Residues 1752–2522 (NKKRRREHGQ…QRTHIPEAFK (771 aa)) are Cytoplasmic-facing. ANK repeat units follow at residues 1877–1920 (DGFT…QLHN), 1925–1954 (TGET…DANV), 1958–1988 (MGRT…DLDA), 1992–2021 (DGTT…DVNA), 2025–2054 (FGKS…NKDM), and 2058–2087 (KEET…NRDI). Disordered regions lie at residues 2146–2229 (MKPS…MPLN), 2365–2404 (LMQA…PFCS), and 2449–2522 (LTPP…EAFK). Residues 2184–2200 (SLLDSGSSGVLSPVDSL) show a composition bias toward low complexity. The segment covering 2218-2229 (SPFQQSPSMPLN) has biased composition (polar residues). Positions 2365-2390 (LMQAQQMQQQQNLQLHQSVQQQQHQN) are enriched in low complexity. Composition is skewed to polar residues over residues 2391–2404 (SNAT…PFCS) and 2449–2469 (LTPP…SHQL). The span at 2479 to 2494 (PSPESPDQWSSSSPHS) shows a compositional bias: low complexity. The segment covering 2495 to 2514 (NMSDWSEGISSPPTSMQPQR) has biased composition (polar residues).

The protein belongs to the NOTCH family. In terms of processing, O-glycosylated on the EGF-like domains. Contains both O-linked fucose and O-linked glucose. O-linked glycosylation by galnt11 is involved in determination of left/right symmetry: glycosylation promotes activation of notch1, possibly by promoting cleavage by adam17, modulating the balance between motile and immotile (sensory) cilia at the left-right organiser (LRO). Post-translationally, synthesized in the endoplasmic reticulum as an inactive form which is proteolytically cleaved by a furin-like convertase in the trans-Golgi network before it reaches the plasma membrane to yield an active, ligand-accessible form. Cleavage results in a C-terminal fragment N(TM) and a N-terminal fragment N(EC). Following ligand binding, it is cleaved by adam17 to yield a membrane-associated intermediate fragment called notch extracellular truncation (NEXT). Following endocytosis, this fragment is then cleaved by presenilin dependent gamma-secretase to release a Notch-derived peptide containing the intracellular domain (NICD) from the membrane.

Its subcellular location is the cell membrane. The protein resides in the nucleus. Functions as a receptor for membrane-bound ligands Jagged-1 (JAG1), Jagged-2 (JAG2) and Delta-1 (DLL1) to regulate cell-fate determination. Upon ligand activation through the released notch intracellular domain (NICD) it forms a transcriptional activator complex with RBPJ/RBPSUH and activates genes of the enhancer of split locus. Affects the implementation of differentiation, proliferation and apoptotic programs. Involved in angiogenesis; negatively regulates endothelial cell proliferation and migration and angiogenic sprouting. Involved in the maturation of both CD4(+) and CD8(+) cells in the thymus. Important for follicular differentiation and possibly cell fate selection within the follicle. During cerebellar development, functions as a receptor for neuronal DNER and is involved in the differentiation of Bergmann glia. Represses neuronal and myogenic differentiation. May play an essential role in postimplantation development, probably in some aspect of cell specification and/or differentiation. May be involved in mesoderm development, somite formation and neurogenesis. Involved in determination of left/right symmetry by modulating the balance between motile and immotile (sensory) cilia at the left-right organiser (LRO). This Xenopus tropicalis (Western clawed frog) protein is Neurogenic locus notch homolog protein 1 (notch1).